The primary structure comprises 638 residues: 1-deoxy-D-xylulose-5-phosphate synthase (638 aa).

Residues H75 and 116 to 118 (AHS) each bind thiamine diphosphate. D147 contacts Mg(2+). Residues 148–149 (GA), N177, Y288, and E370 each bind thiamine diphosphate. Residue N177 participates in Mg(2+) binding.

The protein belongs to the transketolase family. DXPS subfamily. In terms of assembly, homodimer. Mg(2+) is required as a cofactor. It depends on thiamine diphosphate as a cofactor.

It catalyses the reaction D-glyceraldehyde 3-phosphate + pyruvate + H(+) = 1-deoxy-D-xylulose 5-phosphate + CO2. Its pathway is metabolic intermediate biosynthesis; 1-deoxy-D-xylulose 5-phosphate biosynthesis; 1-deoxy-D-xylulose 5-phosphate from D-glyceraldehyde 3-phosphate and pyruvate: step 1/1. Functionally, catalyzes the acyloin condensation reaction between C atoms 2 and 3 of pyruvate and glyceraldehyde 3-phosphate to yield 1-deoxy-D-xylulose-5-phosphate (DXP). This Cupriavidus necator (strain ATCC 17699 / DSM 428 / KCTC 22496 / NCIMB 10442 / H16 / Stanier 337) (Ralstonia eutropha) protein is 1-deoxy-D-xylulose-5-phosphate synthase.